A 747-amino-acid polypeptide reads, in one-letter code: Rho GTPase-activating protein 24 (747 aa).

Disordered regions lie at residues 1–20 (MEER…KNTK) and 327–475 (FPKD…GTHS). In terms of domain architecture, PH spans 17-123 (KNTKCGWLRK…WVKSIRRVIW (107 aa)). The Rho-GAP domain occupies 133–327 (QKLEDTVRYE…VMISKHDRLF (195 aa)). 2 stretches are compositionally biased toward polar residues: residues 334–346 (QSKP…SNNN) and 355–367 (GQLQ…NTKE). Phosphoserine is present on residues Ser368, Ser390, Ser395, Ser397, Ser401, Ser412, Ser414, and Ser436. Positions 368-380 (SPVRRCSWDKPES) are enriched in basic and acidic residues. Residues 381–404 (PQRSSVDNGSPTALSGSKTNSPRN) show a composition bias toward polar residues. Positions 431–475 (IVTNGSFSSSNAEGVEKPQTTPNGSLQARRTSSLKSSGTKMGTHS) are enriched in polar residues. Thr451 is modified (phosphothreonine). Ser494 carries the phosphoserine modification. The interval 581 to 639 (DFYVGNFEDPVLDGPPQDDLSHPGDYENKSDRRSVGGRSSRATSSSDNSETFVGNTSSN) is disordered. The span at 599–614 (DLSHPGDYENKSDRRS) shows a compositional bias: basic and acidic residues. Positions 616–629 (GGRSSRATSSSDNS) are enriched in low complexity. A compositionally biased stretch (polar residues) spans 630–639 (ETFVGNTSSN). A coiled-coil region spans residues 648–728 (SSLKQEMTKQ…KEMEQFFSTF (81 aa)).

Interacts with FLNA. Phosphorylated by ROCK, leading to activate the RacGAP activity.

It is found in the cytoplasm. It localises to the cytoskeleton. The protein localises to the cell junction. Its subcellular location is the adherens junction. The protein resides in the focal adhesion. It is found in the cell projection. Rho GTPase-activating protein involved in cell polarity, cell morphology and cytoskeletal organization. Acts as a GTPase activator for the Rac-type GTPase by converting it to an inactive GDP-bound state. Controls actin remodeling by inactivating Rac downstream of Rho leading to suppress leading edge protrusion and promotes cell retraction to achieve cellular polarity. Able to suppress RAC1 and CDC42 activity in vitro. Overexpression induces cell rounding with partial or complete disruption of actin stress fibers and formation of membrane ruffles, lamellipodia, and filopodia. Isoform 2 is a vascular cell-specific GAP involved in modulation of angiogenesis. This is Rho GTPase-activating protein 24 (Arhgap24) from Mus musculus (Mouse).